Consider the following 669-residue polypeptide: MWARCVNLAWGLLTSRMNLTRLKPCFDNLDGVFGIENSGHHKNSSNVLMLALGALGVVFGDIGTSPLYALKECFGHYGLAPTPENVIGILSLIFWTLVLAICIKYMAFVLRADNKGEGGILSLMALAVRSQQSKDVSRRRWTMTIIGLFGAALLYGDGIITPAISVLSAMEGLTLVAPQFSPYIIPLTIFVMNALFLMQKYGTARIGVIFGPILLIWFTVLGLLGIRGMAKNLHVFEALLPHHGIEFLMNNGMAGFLVLGSVFLVVTGGEALYADMGHFGKRPIRLAWFFVALPALVLNYFGQGALLLNNPEAVSNPFYMLAPKWALLPMVMLSTMATVIASQALITGVFSITRQAIQLGFCPRVNIIHTSSQEIGQIYIPIVNWSMFIGVIWLVLTFKTSSNLAAAYGIAVTGATMITTILAFEVARQKWKWSLLKSSAIFGSFLVMDLAFFGANVHKIPHGGWVPLVIGAIIYLLMTTWQKGRQILFRRLKERSMPIEDFCQKLLREPPLRAPGTAIYMAGDPWGVPAPLLHNMKHNKVLHQRVAILTIQTKEVPFVSKRDRISIQEVIPNIYRIIANYGFMEIPKMKHILEACRQRDINFNVNETTFVLGRETIIAEKGPNRPGEAGMAHWRERLFAIMSKNAQRPTAFFRIPPNQVIEVGIQVEI.

A run of 12 helical transmembrane segments spans residues 47 to 67, 86 to 106, 144 to 164, 172 to 192, 206 to 226, 252 to 272, 288 to 308, 326 to 346, 378 to 398, 404 to 424, 435 to 455, and 460 to 480; these read VLML…TSPL, VIGI…IKYM, TIIG…TPAI, GLTL…IFVM, IGVI…LLGI, GMAG…GEAL, WFFV…ALLL, ALLP…QALI, IYIP…VLTF, LAAA…ILAF, LLKS…FFGA, and IPHG…LMTT.

The protein belongs to the HAK/KUP transporter (TC 2.A.72) family.

It localises to the cell inner membrane. The catalysed reaction is K(+)(in) + H(+)(in) = K(+)(out) + H(+)(out). In terms of biological role, transport of potassium into the cell. Likely operates as a K(+):H(+) symporter. The polypeptide is Probable potassium transport system protein Kup (Bdellovibrio bacteriovorus (strain ATCC 15356 / DSM 50701 / NCIMB 9529 / HD100)).